The chain runs to 238 residues: Endothelin-3 (238 aa).

A signal peptide spans 1-16 (MEPGLWLLFGLTVTSA). The propeptide occupies 17 to 94 (AGFVPCSQSG…AEGAPEHHRS (78 aa)). The disordered stretch occupies residues 24–89 (QSGDAGRRGV…GQEQAAEGAP (66 aa)). Cystine bridges form between cysteine 97-cysteine 111 and cysteine 99-cysteine 107. The propeptide occupies 118-238 (INTPEQTVPY…PRCLFQEGAP (121 aa)). The segment at 159-173 (CACVGRYDKACLHFC) is endothelin-like. The disordered stretch occupies residues 183 to 219 (SRTAEKTDKEEEGKVEVKDQQSKQALDLHHPKLMPGS). Positions 185–212 (TAEKTDKEEEGKVEVKDQQSKQALDLHH) are enriched in basic and acidic residues.

The protein belongs to the endothelin/sarafotoxin family. Expressed in trophoblasts and placental stem villi vessels, but not in cultured placental smooth muscle cells.

Its subcellular location is the secreted. Its function is as follows. Endothelins are endothelium-derived vasoconstrictor peptides. The chain is Endothelin-3 (EDN3) from Homo sapiens (Human).